Reading from the N-terminus, the 1014-residue chain is Poly [ADP-ribose] polymerase 1 (1014 aa).

An N-acetylalanine modification is found at Ala-2. The segment at 9-93 (YRVEYAKSGR…KVKKTAEAGG (85 aa)) adopts a PARP-type 1 zinc-finger fold. Positions 21 and 24 each coordinate Zn(2+). Ser-41 is modified (phosphoserine). His-53 and Cys-56 together coordinate Zn(2+). N6-acetyllysine is present on residues Lys-97 and Lys-105. The PARP-type 2 zinc-finger motif lies at 113 to 203 (FAAEYAKSNR…ALKKQLPGVK (91 aa)). The Zn(2+) site is built by Cys-125 and Cys-128. At Lys-131 the chain carries N6-acetyllysine. Residues His-159 and Cys-162 each coordinate Zn(2+). A phosphoserine mark is found at Ser-177, Ser-179, and Ser-185. Lys-192 is covalently cross-linked (Glycyl lysine isopeptide (Lys-Gly) (interchain with G-Cter in SUMO2)). Positions 198-233 (QLPGVKSEGKRKGDEVDGVDEVAKKKSKKEKDKDSK) are disordered. A Glycyl lysine isopeptide (Lys-Gly) (interchain with G-Cter in SUMO1); alternate cross-link involves residue Lys-203. Lys-203 is covalently cross-linked (Glycyl lysine isopeptide (Lys-Gly) (interchain with G-Cter in SUMO2); alternate). A compositionally biased stretch (basic and acidic residues) spans 204 to 233 (SEGKRKGDEVDGVDEVAKKKSKKEKDKDSK). Short sequence motifs (nuclear localization signal) lie at residues 207–209 (KRK) and 221–226 (KKKSKK). The 135-residue stretch at 225 to 359 (KKEKDKDSKL…VKKQDRIFPP (135 aa)) folds into the PADR1 zinc-binding domain. Lys-249 is covalently cross-linked (Glycyl lysine isopeptide (Lys-Gly) (interchain with G-Cter in SUMO2)). Phosphoserine is present on residues Ser-274 and Ser-277. Residues 290–332 (GALLPCEECSGQLVFKSDAYYCTGDVTAWTKCMVKTQTPNRKE) form a zinc ribbon region. Positions 295, 298, 311, and 321 each coordinate Zn(2+). The interval 361–385 (TSASVAATPPPSTASAPAAVNSSAS) is disordered. Ser-364 bears the Phosphoserine mark. Residue Thr-368 is modified to Phosphothreonine. The tract at residues 373–524 (TASAPAAVNS…GINKSEKRMK (152 aa)) is automodification domain. The 92-residue stretch at 385 to 476 (SADKPLSNMK…KSLQELFLAH (92 aa)) folds into the BRCT domain. Asp-387 is modified (polyADP-ribosyl aspartic acid). PolyADP-ribosyl glutamic acid is present on residues Glu-407, Glu-413, Glu-435, Glu-437, Glu-444, Glu-445, Glu-448, and Glu-456. Lys-467 participates in a covalent cross-link: Glycyl lysine isopeptide (Lys-Gly) (interchain with G-Cter in SUMO2). 2 positions are modified to polyADP-ribosyl glutamic acid: Glu-471 and Glu-484. A Glycyl lysine isopeptide (Lys-Gly) (interchain with G-Cter in SUMO1); alternate cross-link involves residue Lys-486. Residue Lys-486 forms a Glycyl lysine isopeptide (Lys-Gly) (interchain with G-Cter in SUMO2); alternate linkage. A polyADP-ribosyl glutamic acid mark is found at Glu-488 and Glu-491. Ser-499, Ser-504, and Ser-507 each carry ADP-ribosylserine. A Glycyl lysine isopeptide (Lys-Gly) (interchain with G-Cter in SUMO2) cross-link involves residue Lys-512. Residues Glu-513 and Glu-514 each carry the polyADP-ribosyl glutamic acid modification. Ser-519 carries the post-translational modification ADP-ribosylserine. At Glu-520 the chain carries PolyADP-ribosyl glutamic acid. Lys-521 carries the N6-(ADP-ribosyl)lysine modification. Lys-528 is covalently cross-linked (Glycyl lysine isopeptide (Lys-Gly) (interchain with G-Cter in SUMO2)). The WGR domain occupies 542-638 (SAHVLEKGGK…KNFTKYPKKF (97 aa)). Thr-594 is modified (phosphothreonine; by PRKDC). Residues Lys-600 and Lys-621 each carry the N6-acetyllysine modification. The PARP alpha-helical domain maps to 662-779 (KSKLPKPVQD…DIEVAYSLLR (118 aa)). Lys-748 is covalently cross-linked (Glycyl lysine isopeptide (Lys-Gly) (interchain with G-Cter in SUMO1); alternate). Lys-748 participates in a covalent cross-link: Glycyl lysine isopeptide (Lys-Gly) (interchain with G-Cter in SUMO2); alternate. Phosphoserine is present on residues Ser-782 and Ser-786. In terms of domain architecture, PARP catalytic spans 788–1014 (DPIDVNYEKL…LKFNFKTSLW (227 aa)). Residues 862-864 (HGS), Gly-871, Arg-878, and Ser-904 each bind NAD(+). The active-site For poly [ADP-ribose] polymerase activity is Glu-988.

This sequence belongs to the ARTD/PARP family. Homodimer; PARP-type zinc-fingers from separate PARP1 molecules form a dimer module that specifically recognizes DNA strand breaks. Heterodimer; heterodimerizes with PARP2. Interacts (via the PARP catalytic domain) with HPF1. Interacts with NMNAT1. Interacts with nucleosomes; with a preference for nucleosomes containing H2A.X. Interacts with APTX. Component of a base excision repair (BER) complex, containing at least XRCC1, PARP1, PARP2, POLB and LRIG3. Interacts with SRY. The SWAP complex consists of NPM1, NCL, PARP1 and SWAP70. Interacts with TIAM2. Interacts with PARP3; leading to activate PARP1 in absence of DNA. Interacts (when poly-ADP-ribosylated) with CHD1L (via macro domain). Interacts with the DNA polymerase alpha catalytic subunit POLA1; this interaction functions as part of the control of replication fork progression. Interacts with EEF1A1 and TXK. Interacts with RNF4. Interacts with RNF146. Interacts with ZNF423. Interacts with APLF. Interacts with SNAI1 (via zinc fingers); the interaction requires SNAI1 to be poly-ADP-ribosylated and non-phosphorylated (active) by GSK3B. Interacts (when poly-ADP-ribosylated) with PARP9. Interacts with NR4A3; activates PARP1 by improving acetylation of PARP1 and suppressing the interaction between PARP1 and SIRT1. Interacts (via catalytic domain) with PUM3; the interaction inhibits the poly-ADP-ribosylation activity of PARP1 and the degradation of PARP1 by CASP3 following genotoxic stress. Interacts with ZNF365. Interacts with RRP1B. Interacts with TIMELESS; the interaction is direct. Interacts with CGAS; leading to impede the formation of the PARP1-TIMELESS complex. Interacts with KHDC3L, the interaction is increased following the formation of DNA double-strand breaks. Interacts (when auto-poly-ADP-ribosylated) with XRCC1; leading to inhibit PARP1 ADP-ribosyltransferase activity. Interacts with SPINDOC; promoting PARP1 ADP-ribosyltransferase activity. Interacts with BANF1; leading to inhibit PARP1 ADP-ribosyltransferase activity in response to oxidative DNA damage. Interacts (when sumoylated and ubiquitinated) with VCP/p97; leading to its extraction from chromatin. Interacts with YARS1; Interacts with PACMP micropeptide; interaction. Interacts with PACMP micropeptide; Interacts with PACMP micropeptide; interaction. Interacts (when poly-ADP-ribosylated) with isoform 1 of MACROH2A1; MACROH2A1 specifically binds to poly-ADP-ribose chains and inhibits PARP1 activity, limiting the consumption of nuclear NAD(+). Interacts with CARM1; promoting recruitment to replication forks. Interacts with RECQL. Interacts with ZNF32; the interaction reshapes ZNF432 interacting proteins. Interacts with TPRN; TPRN interacts with a number of DNA damage response proteins, is recruited to sites of DNA damage and may play a role in DNA damage repair. In terms of assembly, interacts (when auto-poly-ADP-ribosylated) with AIFM1. As to quaternary structure, (Microbial infection) Interacts with human herpesvirus 8 (KSHV) protein RTA/ORF50; this interaction negatively regulates RTA/ORF50 transactivation activity. In terms of processing, poly-ADP-ribosylated on serine, glutamate and aspartate residues by autocatalysis. Auto-ADP-ribosylation on serine takes place following interaction with HPF1. Auto poly-ADP-ribosylation on serine residues promotes its dissociation from chromatin. Poly-ADP-ribosylated by PARP2; poly-ADP-ribosylation mediates the recruitment of CHD1L to DNA damage sites. Mono-ADP-ribosylated at Lys-521 by SIRT6 in response to oxidative stress, promoting recruitment to double-strand breaks (DSBs) sites. Phosphorylated at Thr-594 by PRKDC in response to DNA damage following virus infection, promoting its translocation to the cytosol. Phosphorylated by TXK. Post-translationally, S-nitrosylated, leading to inhibit transcription regulation activity. In terms of processing, proteolytically cleaved by caspase-3 (CASP3) and caspase-7 (CASP7) in response to apoptosis to generate the Poly [ADP-ribose] polymerase 1, processed N-terminus and Poly [ADP-ribose] polymerase 1, processed C-terminus forms. CASP3-mediated cleavage is promoted by the TP53/p53-induced long non-coding RNA SPARCLE, which binds PARP1 in response to genotoxic stress. Sumoylated with SUMO1 or SUMO2 by PIAS4 following prolonged residence (trapping) to chromatin. Sumoylation promotes ubiquitination by RNF4 and removal from chromatin by VCP/p97. Post-translationally, ubiquitinated by RNF4 following sumoylation by PIAS4 in response to prolonged residence (trapping) to chromatin. Ubiquitination promotes removal from chromatin by VCP/p97.

It is found in the chromosome. It localises to the nucleus. The protein localises to the nucleolus. Its subcellular location is the cytoplasm. The protein resides in the cytosol. The catalysed reaction is NAD(+) + (ADP-D-ribosyl)n-acceptor = nicotinamide + (ADP-D-ribosyl)n+1-acceptor + H(+).. The enzyme catalyses L-seryl-[protein] + NAD(+) = O-(ADP-D-ribosyl)-L-seryl-[protein] + nicotinamide + H(+). It catalyses the reaction L-aspartyl-[protein] + NAD(+) = 4-O-(ADP-D-ribosyl)-L-aspartyl-[protein] + nicotinamide. It carries out the reaction L-glutamyl-[protein] + NAD(+) = 5-O-(ADP-D-ribosyl)-L-glutamyl-[protein] + nicotinamide. The catalysed reaction is L-tyrosyl-[protein] + NAD(+) = O-(ADP-D-ribosyl)-L-tyrosyl-[protein] + nicotinamide + H(+). The enzyme catalyses L-histidyl-[protein] + NAD(+) = N(tele)-(ADP-D-ribosyl)-L-histidyl-[protein] + nicotinamide + H(+). Its activity is regulated as follows. ADP-ribosyltransferase activity is regulated via an allosteric activation mechanism. In absence of activation signal, PARP1 is autoinhibited by the PARP alpha-helical domain (also named HD region), which prevents effective NAD(+)-binding. Activity is highly stimulated by signals, such as DNA strand breaks. Binding to damaged DNA unfolds the PARP alpha-helical domain, relieving autoinhibition. Poly-ADP-ribosyltransferase activity is tightly regulated and PARP1 is removed from damaged chromatin following initial poly-ADP-ribosylation of chromatin to avoid prolonged residence (trapping) that has cytotoxic consequences. A number of factors (VCP/p97) or post-translational modifications (auto-poly-ADP-ribosylation or ubiquitination) promote PARP1 removal from chromatin. ADP-ribosyltransferase activity is inhibited by a number of PARP inhibitors (PARPi) compounds, that are used the treatment of breast or ovarian cancers that have defects in DNA repair by homologous recombination. PARPi molecules can be classified in three categories: type I compounds (EB-47, UKTT15 and BAD) that promote allosteric retention of PARP1 on DNA, type II inhibitors (talazoparib and olaparib) that mediate a non-allosteric inhibition, and type III inhibitors (rucaparib, niraparib, and veliparib) that promote allosteric release from DNA. Trapping to chromatin by PARPi molecules triggers activation of the cGAS-STING pathway. Functionally, poly-ADP-ribosyltransferase that mediates poly-ADP-ribosylation of proteins and plays a key role in DNA repair. Mediates glutamate, aspartate, serine, histidine or tyrosine ADP-ribosylation of proteins: the ADP-D-ribosyl group of NAD(+) is transferred to the acceptor carboxyl group of target residues and further ADP-ribosyl groups are transferred to the 2'-position of the terminal adenosine moiety, building up a polymer with an average chain length of 20-30 units. Serine ADP-ribosylation of proteins constitutes the primary form of ADP-ribosylation of proteins in response to DNA damage. Specificity for the different amino acids is conferred by interacting factors, such as HPF1 and NMNAT1. Following interaction with HPF1, catalyzes serine ADP-ribosylation of target proteins; HPF1 confers serine specificity by completing the PARP1 active site. Also catalyzes tyrosine ADP-ribosylation of target proteins following interaction with HPF1. Following interaction with NMNAT1, catalyzes glutamate and aspartate ADP-ribosylation of target proteins; NMNAT1 confers glutamate and aspartate specificity. PARP1 initiates the repair of DNA breaks: recognizes and binds DNA breaks within chromatin and recruits HPF1, licensing serine ADP-ribosylation of target proteins, such as histones (H2BS6ADPr and H3S10ADPr), thereby promoting decompaction of chromatin and the recruitment of repair factors leading to the reparation of DNA strand breaks. HPF1 initiates serine ADP-ribosylation but restricts the polymerase activity of PARP1 in order to limit the length of poly-ADP-ribose chains. In addition to base excision repair (BER) pathway, also involved in double-strand breaks (DSBs) repair: together with TIMELESS, accumulates at DNA damage sites and promotes homologous recombination repair by mediating poly-ADP-ribosylation. Mediates the poly-ADP-ribosylation of a number of proteins, including itself, APLF, CHFR, RPA1 and NFAT5. In addition to proteins, also able to ADP-ribosylate DNA: catalyzes ADP-ribosylation of DNA strand break termini containing terminal phosphates and a 2'-OH group in single- and double-stranded DNA, respectively. Required for PARP9 and DTX3L recruitment to DNA damage sites. PARP1-dependent PARP9-DTX3L-mediated ubiquitination promotes the rapid and specific recruitment of 53BP1/TP53BP1, UIMC1/RAP80, and BRCA1 to DNA damage sites. PARP1-mediated DNA repair in neurons plays a role in sleep: senses DNA damage in neurons and promotes sleep, facilitating efficient DNA repair. In addition to DNA repair, also involved in other processes, such as transcription regulation, programmed cell death, membrane repair, adipogenesis and innate immunity. Acts as a repressor of transcription: binds to nucleosomes and modulates chromatin structure in a manner similar to histone H1, thereby altering RNA polymerase II. Acts both as a positive and negative regulator of transcription elongation, depending on the context. Acts as a positive regulator of transcription elongation by mediating poly-ADP-ribosylation of NELFE, preventing RNA-binding activity of NELFE and relieving transcription pausing. Acts as a negative regulator of transcription elongation in response to DNA damage by catalyzing poly-ADP-ribosylation of CCNT1, disrupting the phase separation activity of CCNT1 and subsequent activation of CDK9. Involved in replication fork progression following interaction with CARM1: mediates poly-ADP-ribosylation at replication forks, slowing fork progression. Poly-ADP-ribose chains generated by PARP1 also play a role in poly-ADP-ribose-dependent cell death, a process named parthanatos. Also acts as a negative regulator of the cGAS-STING pathway. Acts by mediating poly-ADP-ribosylation of CGAS: PARP1 translocates into the cytosol following phosphorylation by PRKDC and catalyzes poly-ADP-ribosylation and inactivation of CGAS. Acts as a negative regulator of adipogenesis: catalyzes poly-ADP-ribosylation of histone H2B on 'Glu-35' (H2BE35ADPr) following interaction with NMNAT1, inhibiting phosphorylation of H2B at 'Ser-36' (H2BS36ph), thereby blocking expression of pro-adipogenetic genes. Involved in the synthesis of ATP in the nucleus, together with NMNAT1, PARG and NUDT5. Nuclear ATP generation is required for extensive chromatin remodeling events that are energy-consuming. Promotes AIFM1-mediated apoptosis. This form, which translocates into the cytoplasm following cleavage by caspase-3 (CASP3) and caspase-7 (CASP7) in response to apoptosis, is auto-poly-ADP-ribosylated and serves as a poly-ADP-ribose carrier to induce AIFM1-mediated apoptosis. In terms of biological role, this cleavage form irreversibly binds to DNA breaks and interferes with DNA repair, promoting DNA damage-induced apoptosis. The chain is Poly [ADP-ribose] polymerase 1 from Homo sapiens (Human).